The chain runs to 62 residues: Photosystem II reaction center protein Z (62 aa).

2 helical membrane-spanning segments follow: residues Thr8–Ala28 and Phe41–Val61.

The protein belongs to the PsbZ family. As to quaternary structure, PSII is composed of 1 copy each of membrane proteins PsbA, PsbB, PsbC, PsbD, PsbE, PsbF, PsbH, PsbI, PsbJ, PsbK, PsbL, PsbM, PsbT, PsbY, PsbZ, Psb30/Ycf12, at least 3 peripheral proteins of the oxygen-evolving complex and a large number of cofactors. It forms dimeric complexes.

It localises to the plastid. It is found in the chloroplast thylakoid membrane. Its function is as follows. May control the interaction of photosystem II (PSII) cores with the light-harvesting antenna, regulates electron flow through the 2 photosystem reaction centers. PSII is a light-driven water plastoquinone oxidoreductase, using light energy to abstract electrons from H(2)O, generating a proton gradient subsequently used for ATP formation. This is Photosystem II reaction center protein Z from Oltmannsiellopsis viridis (Marine flagellate).